Here is a 378-residue protein sequence, read N- to C-terminus: Chorismate synthase (378 aa).

Residues 42–61 (IQAELDRRRPGQSPITTPRQ) are disordered. Arginine 49 contacts NADP(+). FMN contacts are provided by residues 126 to 128 (RAS), glycine 287, 302 to 306 (KPTAT), and arginine 328.

The protein belongs to the chorismate synthase family. As to quaternary structure, homotetramer. FMNH2 serves as cofactor.

The catalysed reaction is 5-O-(1-carboxyvinyl)-3-phosphoshikimate = chorismate + phosphate. It functions in the pathway metabolic intermediate biosynthesis; chorismate biosynthesis; chorismate from D-erythrose 4-phosphate and phosphoenolpyruvate: step 7/7. In terms of biological role, catalyzes the anti-1,4-elimination of the C-3 phosphate and the C-6 proR hydrogen from 5-enolpyruvylshikimate-3-phosphate (EPSP) to yield chorismate, which is the branch point compound that serves as the starting substrate for the three terminal pathways of aromatic amino acid biosynthesis. This reaction introduces a second double bond into the aromatic ring system. The chain is Chorismate synthase from Synechococcus sp. (strain JA-2-3B'a(2-13)) (Cyanobacteria bacterium Yellowstone B-Prime).